A 585-amino-acid polypeptide reads, in one-letter code: Glutamine--tRNA ligase (585 aa).

A 'HIGH' region motif is present at residues 51 to 61; the sequence is PEPNGYLHIGH. ATP is bound by residues 52-54 and 58-64; these read EPN and HIGHAKS. Positions 84 and 238 each coordinate L-glutamine. ATP-binding positions include threonine 257 and 292 to 293; that span reads RL. The short motif at 299–303 is the 'KMSKS' region element; that stretch reads ITSKR.

Belongs to the class-I aminoacyl-tRNA synthetase family. In terms of assembly, monomer.

The protein localises to the cytoplasm. The catalysed reaction is tRNA(Gln) + L-glutamine + ATP = L-glutaminyl-tRNA(Gln) + AMP + diphosphate. This Cupriavidus necator (strain ATCC 17699 / DSM 428 / KCTC 22496 / NCIMB 10442 / H16 / Stanier 337) (Ralstonia eutropha) protein is Glutamine--tRNA ligase.